Here is a 92-residue protein sequence, read N- to C-terminus: RNA-binding protein Hfq (92 aa).

The region spanning 9-68 (DPFLNALRRERVPVSIYLVNGIKLQGQVESFDQFVILLKNTVSQMVYKHAISTVVPARPF) is the Sm domain. Residues 68 to 92 (FNVSSHHNTPNQAAGYNASHDDSAE) form a disordered region. The segment covering 69-81 (NVSSHHNTPNQAA) has biased composition (polar residues).

This sequence belongs to the Hfq family. In terms of assembly, homohexamer.

RNA chaperone that binds small regulatory RNA (sRNAs) and mRNAs to facilitate mRNA translational regulation in response to envelope stress, environmental stress and changes in metabolite concentrations. Also binds with high specificity to tRNAs. The protein is RNA-binding protein Hfq of Shewanella loihica (strain ATCC BAA-1088 / PV-4).